Here is a 278-residue protein sequence, read N- to C-terminus: ATP synthase subunit a (278 aa).

Helical transmembrane passes span 43 to 63, 104 to 124, 148 to 168, 191 to 211, 222 to 242, and 249 to 269; these read TWHI…LWIF, IAPL…MDMI, DVNI…FYSI, IPVN…SLAL, LIFI…TLGV, and LIFH…LTIV.

This sequence belongs to the ATPase A chain family. As to quaternary structure, F-type ATPases have 2 components, CF(1) - the catalytic core - and CF(0) - the membrane proton channel. CF(1) has five subunits: alpha(3), beta(3), gamma(1), delta(1), epsilon(1). CF(0) has three main subunits: a(1), b(2) and c(9-12). The alpha and beta chains form an alternating ring which encloses part of the gamma chain. CF(1) is attached to CF(0) by a central stalk formed by the gamma and epsilon chains, while a peripheral stalk is formed by the delta and b chains.

Its subcellular location is the cell inner membrane. Its function is as follows. Key component of the proton channel; it plays a direct role in the translocation of protons across the membrane. This chain is ATP synthase subunit a, found in Shewanella baltica (strain OS185).